The primary structure comprises 66 residues: Beta-mammal toxin Cv1 (66 aa).

In terms of domain architecture, LCN-type CS-alpha/beta spans 1–66; sequence KEGYIVNLST…VWPLPKKTCN (66 aa). Intrachain disulfides connect C12–C65, C16–C41, C25–C46, and C29–C48.

In terms of tissue distribution, expressed by the venom gland.

Its subcellular location is the secreted. Is susceptible to be neutralized by human antibodies scFvs 10FG2 and HV. Beta toxins bind voltage-independently at site-4 of sodium channels (Nav) and reduces peak current and shifts the voltage of activation toward more negative potentials thereby affecting sodium channel activation and promoting spontaneous and repetitive firing. This toxin is slightly toxic to mice. The protein is Beta-mammal toxin Cv1 of Centruroides villegasi (Scorpion).